The chain runs to 116 residues: NADPH-dependent 7-cyano-7-deazaguanine reductase (116 aa).

Cys31 acts as the Thioimide intermediate in catalysis. Residue Asp38 is the Proton donor of the active site. Substrate-binding positions include 53-55 (IEL) and 72-73 (YE).

This sequence belongs to the GTP cyclohydrolase I family. QueF type 1 subfamily.

The protein localises to the cytoplasm. The catalysed reaction is 7-aminomethyl-7-carbaguanine + 2 NADP(+) = 7-cyano-7-deazaguanine + 2 NADPH + 3 H(+). Its pathway is tRNA modification; tRNA-queuosine biosynthesis. Functionally, catalyzes the NADPH-dependent reduction of 7-cyano-7-deazaguanine (preQ0) to 7-aminomethyl-7-deazaguanine (preQ1). The sequence is that of NADPH-dependent 7-cyano-7-deazaguanine reductase from Chlorobaculum parvum (strain DSM 263 / NCIMB 8327) (Chlorobium vibrioforme subsp. thiosulfatophilum).